Reading from the N-terminus, the 264-residue chain is Lysosomal-associated transmembrane protein 5 (264 aa).

A run of 5 helical transmembrane segments spans residues 19–39 (IATTALAIYHVIMSVLLFIEH), 64–84 (VSSFLLITMLFIISLSLLVGV), 92–112 (LLPFLSLQIMDFLLCLLTLMG), 136–156 (VPLMTLQLLDFCLSILTLCSS), and 186–206 (FIKIMIIFSIAFITVLILKVY). Position 261 is a phosphotyrosine (Y261).

The protein belongs to the LAPTM4/LAPTM5 transporter family. As to quaternary structure, binds to ubiquitin.

The protein resides in the lysosome membrane. Its function is as follows. May have a special functional role during embryogenesis and in adult hematopoietic cells. This Bos taurus (Bovine) protein is Lysosomal-associated transmembrane protein 5 (LAPTM5).